The sequence spans 1482 residues: Chromosome partition protein MukB (1482 aa).

Position 34 to 41 (34 to 41) interacts with ATP; sequence GGNGAGKS. A coiled-coil region spans residues 333 to 665; it reads ASDHLNLVQT…LEKQIERLSQ (333 aa). The interval 666 to 783 is flexible hinge; that stretch reads PSGAEDSRMI…ELPLFGRAAR (118 aa). Coiled coils occupy residues 784-1116 and 1209-1260; these read ENRL…AKAG and VDAI…MLNQ.

This sequence belongs to the SMC family. MukB subfamily. As to quaternary structure, homodimerization via its hinge domain. Binds to DNA via its C-terminal region. Interacts, and probably forms a ternary complex, with MukE and MukF via its C-terminal region. The complex formation is stimulated by calcium or magnesium. Interacts with tubulin-related protein FtsZ.

The protein localises to the cytoplasm. The protein resides in the nucleoid. Its function is as follows. Plays a central role in chromosome condensation, segregation and cell cycle progression. Functions as a homodimer, which is essential for chromosome partition. Involved in negative DNA supercoiling in vivo, and by this means organize and compact chromosomes. May achieve or facilitate chromosome segregation by condensation DNA from both sides of a centrally located replisome during cell division. The polypeptide is Chromosome partition protein MukB (Photorhabdus laumondii subsp. laumondii (strain DSM 15139 / CIP 105565 / TT01) (Photorhabdus luminescens subsp. laumondii)).